Reading from the N-terminus, the 318-residue chain is Acetyl-coenzyme A carboxylase carboxyl transferase subunit alpha (318 aa).

The CoA carboxyltransferase C-terminal domain maps to 39 to 297 (RLEKRSQTAL…SEALKAMVGK (259 aa)).

This sequence belongs to the AccA family. As to quaternary structure, acetyl-CoA carboxylase is a heterohexamer composed of biotin carboxyl carrier protein (AccB), biotin carboxylase (AccC) and two subunits each of ACCase subunit alpha (AccA) and ACCase subunit beta (AccD).

It localises to the cytoplasm. The enzyme catalyses N(6)-carboxybiotinyl-L-lysyl-[protein] + acetyl-CoA = N(6)-biotinyl-L-lysyl-[protein] + malonyl-CoA. The protein operates within lipid metabolism; malonyl-CoA biosynthesis; malonyl-CoA from acetyl-CoA: step 1/1. In terms of biological role, component of the acetyl coenzyme A carboxylase (ACC) complex. First, biotin carboxylase catalyzes the carboxylation of biotin on its carrier protein (BCCP) and then the CO(2) group is transferred by the carboxyltransferase to acetyl-CoA to form malonyl-CoA. The polypeptide is Acetyl-coenzyme A carboxylase carboxyl transferase subunit alpha (Bartonella tribocorum (strain CIP 105476 / IBS 506)).